Reading from the N-terminus, the 1185-residue chain is Chromosome partition protein Smc (1185 aa).

32-39 (PNGSGKSN) provides a ligand contact to ATP. Residues 167 to 494 (ISKYKSRKMD…KLNEKNSHLS (328 aa)) adopt a coiled-coil conformation. Residues 521 to 639 (TGIIGVVADQ…TDLKSAIEIA (119 aa)) form the SMC hinge domain. Residues 677 to 1031 (RSRKIEDLKK…KVIQEIEETM (355 aa)) adopt a coiled-coil conformation.

It belongs to the SMC family. Homodimer.

The protein localises to the cytoplasm. In terms of biological role, required for chromosome condensation and partitioning. The protein is Chromosome partition protein Smc of Halothermothrix orenii (strain H 168 / OCM 544 / DSM 9562).